The following is a 378-amino-acid chain: Forkhead box protein F1 (378 aa).

The tract at residues 1-45 is disordered; it reads MSAPDKQQPPHGGGTGGGGGAGGQAMDPAAAGPTKAKKTNAGVRR. Residues 11 to 23 are compositionally biased toward gly residues; that stretch reads HGGGTGGGGGAGG. The span at 24–42 shows a compositional bias: low complexity; the sequence is QAMDPAAAGPTKAKKTNAG. The fork-head DNA-binding region spans 47–138; the sequence is EKPPYSYIAL…EFMFEEGSFR (92 aa).

In terms of tissue distribution, expressed primarily in lung in alveolar type II pneumocyte cells, and to a lesser extent in placenta, stomach, intestine and colon.

It localises to the nucleus. In terms of biological role, probable transcription activator for a number of lung-specific genes. The protein is Forkhead box protein F1 (Foxf1) of Mus musculus (Mouse).